An 89-amino-acid chain; its full sequence is Large ribosomal subunit protein eL34 (89 aa).

A disordered region spans residues 1-32 (MPAPRFKSGSFKKISKRGPGNKTLTHHRRSKV).

This sequence belongs to the eukaryotic ribosomal protein eL34 family.

In Methanococcus aeolicus (strain ATCC BAA-1280 / DSM 17508 / OCM 812 / Nankai-3), this protein is Large ribosomal subunit protein eL34.